Here is a 61-residue protein sequence, read N- to C-terminus: Large ribosomal subunit protein uL30 (61 aa).

It belongs to the universal ribosomal protein uL30 family. In terms of assembly, part of the 50S ribosomal subunit.

The polypeptide is Large ribosomal subunit protein uL30 (Francisella tularensis subsp. tularensis (strain FSC 198)).